Reading from the N-terminus, the 80-residue chain is MAGGPRRGGRRRKKVCYFTANGITHIDYKDTDLLKRFISERGKILPRRVTGTSAKYQRMLTTAIKRARHMALLPYVKEEN.

This sequence belongs to the bacterial ribosomal protein bS18 family. Part of the 30S ribosomal subunit. Forms a tight heterodimer with protein bS6.

In terms of biological role, binds as a heterodimer with protein bS6 to the central domain of the 16S rRNA, where it helps stabilize the platform of the 30S subunit. The polypeptide is Small ribosomal subunit protein bS18 (Staphylococcus carnosus (strain TM300)).